A 1854-amino-acid polypeptide reads, in one-letter code: MKKFLGEKQTRFAFRKLAVGLVSAAISSLFFVSIVGVDSVQAQEKLNVHYKYVTDTEITPQEKELIVSGVPRMPEGNEETYYLVYRLNSNAGAKTLPNTGDNNSNTMMAAGLLLTTIGLVVFAVSKRKVQSKFLLTVLVGASVGGGLILSVDALENGSLLQYNAEYQVSAGESLPSPGEISGYTYVGYIKDESIKKLLDNKIPDNQQNANVDKEALNQNKKLDYSVSFDKNGLKNQTVGVNTIEPQDEVLSGRVAKPELLYKETSIETEIAYGEQIQENPDLAEGTVRVKQEGKPGRKIEVVRIFTVDNAEVSREVLSTKIEEATPKIVEKGTKKLEAPSEKPVTSNLVQPEQVAPLPEYTGVQSGAIVEPEQVASLPEYSGTLSGAIVEPEQIEPEIGGVQSGAIVEPEQVTPLPEYTGTQAGAVVSPEQVAPLPEYTGTQSGAIVEPAQVTPLPEYTGVQSGAIVKPAQVTPLPEYTGTQSGAIVEPEQVTPSPEYTGVQAGAIVEPEQVASLPEYTGSQAGAIVEPEQVEPPQEYTGNIEPAAPEAENPTEKAQEPKEQKQEPEKNIELRNVSDVELYSLADGKYKQHVSLDAIPSNQENYFVKVKSSKFKDVFLPISSIVDSTKDGQPVYKITASAEKLKQDVNNKYEDNFTFYLAKKAEREVTNFTSFSNLVQAINNNLNGTYYLAASLNANEVELENGASSYIKGRFTGKLFGSKDGKNYAIYNLKKPLFDTLSAATVENLTLKDVNISGKTDIGALANEANNATRINNVHVDGVLAGERGIGGLVWKADNSKISNSSFKGRIVNSYETKAPYNIGGLVGQLTGINALVDKSKATITISSNADSTNQTVGGLAGLVEKDALISNSYAEGNINNVKRFGSVAGVAGYLWDRDSSEERHAGRLHNVLSDINVMNGNAISGYHYRGMRITDSYSNKDNRVYKVTLEKDEVVTKESLEERGTILDVSQIASKKSEINSLSAPKVETLLTSTNKESDFSKVKDYQASRALAYKNIEKLLPFYNKATIVKYGNLVKEDSTLYEKEILSAVMMKDNEVITDIASHKEAANKLLIHYKDHSSEKLDLTYQSDFSKLAEYRVGDTGLIYTPNQFLQNHSSIVNEVLPDLKAVDYQSEAIRNTLGISSGVSLTELYLEEQFAKTKENLANTLEKLLSADAVIASENQTINGYVVDKIKRNKEALLLGLTYLERWYNFNYGDVNVKDLVMYHMDFFGKGNVSPLDTIIELGKSGFNNLLAKNNVDAYNISLANNNATKDLFSTLANYREVFLPNKTNNQWFKEQTKAYIVEEKSAIDEVRVKQEQAGSKYSIGVYDRITSDTWKYRNMVLPLLTMPERSVFVISTISSLGFGAYDRYRNNEHRAGAELNKFVEDNAQETAKRQRDHYDYWYRILDEQGREKLYRNILVYDAYKFGDDTTVDKATVEAQFDSSNPAMKYFFGPVGNKVVHNKHGAYATGDSVYYMGYRMLDKDGAITYTHEMTHDSDNEIYLGGYGRRSGLGPEFFAKGLLQAPDHPDDATITVNSILKYDKNDASEKSRLQVLDPTKRFQNADDLKNYVHNMFDVIYMLEYLEGMSIVNRLSDVQKVNALRKIENKYVRDADGNDVYATNVIKNITMADAQKLNSFNSLIENDILSAREYKNGDVERNGYHTIKLFSPIYSALSSEKGTPGDLMGRRIAYELLAAKGFKDGMVPYISNQYEDDAKQNGKTISIYGKTRGLVTDDLVLRKVFNGQFNNWTEFKKAMYEERKNKFDSLNKVTFDDTRQPWTSYATKTISTVEELQTLMDEAVLQDANDNWYSWSGYKPEYNSAVHKLKKAVFKAYLDQTKDFRKSIFENQK.

A signal peptide spans 1–37; that stretch reads MKKFLGEKQTRFAFRKLAVGLVSAAISSLFFVSIVGV. Residues 38–99 constitute a propeptide that is removed on maturation; it reads DSVQAQEKLN…NAGAKTLPNT (62 aa). The short motif at 96 to 100 is the LPXTG sorting signal element; it reads LPNTG. Residue T99 is modified to Pentaglycyl murein peptidoglycan amidated threonine. Helical transmembrane passes span 106–125 and 132–154; these read TMMA…FAVS and KFLL…VDAL. The Extracellular portion of the chain corresponds to 155–1854; that stretch reads ENGSLLQYNA…FRKSIFENQK (1700 aa). Residues 256–335 enclose the G5 domain; sequence KPELLYKETS…PKIVEKGTKK (80 aa). Tandem repeats lie at residues 349–368, 369–388, 389–406, 407–426, 427–446, 447–466, 467–486, 487–506, 507–526, and 527–546. The tract at residues 349-546 is 10 X 20 AA approximate tandem repeats; the sequence is VQPEQVAPLP…EYTGNIEPAA (198 aa). The segment covering 533 to 550 has biased composition (low complexity); sequence EPPQEYTGNIEPAAPEAE. The segment at 533–570 is disordered; sequence EPPQEYTGNIEPAAPEAENPTEKAQEPKEQKQEPEKNI. Residues 552–570 show a composition bias toward basic and acidic residues; the sequence is PTEKAQEPKEQKQEPEKNI. H1494 serves as a coordination point for Zn(2+). E1495 is a catalytic residue. Positions 1498 and 1518 each coordinate Zn(2+).

It belongs to the peptidase M26 family. It depends on Zn(2+) as a cofactor. In terms of processing, the Gram-positive cell-wall anchor motif LPXTG is located in the N-terminal part, in contrast to such motifs in other known streptococcal and staphylococcal proteins. The protease could be cleaved by the sortase and anchored in the membrane via the two potential N-terminal transmembrane domains, whereas the propeptide located prior to the LPXTG motif would remain attached to the cell wall peptidoglycan by an amide bond.

Its subcellular location is the secreted. The protein resides in the cell wall. The protein localises to the membrane. It carries out the reaction Cleavage of Pro-|-Thr bond in the hinge region of the heavy chain of human IgA.. Its activity is regulated as follows. Inhibited by EDTA. Zinc metalloproteinase which cleaves human immunoglobulin A1 (IgA1) in the hinge region. The sequence is that of Immunoglobulin A1 protease (iga) from Streptococcus sanguinis.